The chain runs to 219 residues: Orotate phosphoribosyltransferase (219 aa).

Lys26 is a binding site for 5-phospho-alpha-D-ribose 1-diphosphate. Residue 34–35 (FF) coordinates orotate. 5-phospho-alpha-D-ribose 1-diphosphate-binding positions include 72–73 (YK), Arg98, Lys99, Lys102, His104, and 124–132 (DDVITAGTA). The orotate site is built by Thr128 and Arg156.

The protein belongs to the purine/pyrimidine phosphoribosyltransferase family. PyrE subfamily. As to quaternary structure, homodimer. Requires Mg(2+) as cofactor.

It carries out the reaction orotidine 5'-phosphate + diphosphate = orotate + 5-phospho-alpha-D-ribose 1-diphosphate. The protein operates within pyrimidine metabolism; UMP biosynthesis via de novo pathway; UMP from orotate: step 1/2. Functionally, catalyzes the transfer of a ribosyl phosphate group from 5-phosphoribose 1-diphosphate to orotate, leading to the formation of orotidine monophosphate (OMP). In Xylella fastidiosa (strain M23), this protein is Orotate phosphoribosyltransferase.